A 166-amino-acid chain; its full sequence is Small ribosomal subunit protein uS5 (166 aa).

In terms of domain architecture, S5 DRBM spans 12–75 (YIEKLVQVNR…EAARRNMIQV (64 aa)).

This sequence belongs to the universal ribosomal protein uS5 family. As to quaternary structure, part of the 30S ribosomal subunit. Contacts proteins S4 and S8.

Its function is as follows. With S4 and S12 plays an important role in translational accuracy. Functionally, located at the back of the 30S subunit body where it stabilizes the conformation of the head with respect to the body. The polypeptide is Small ribosomal subunit protein uS5 (Pseudomonas fluorescens (strain Pf0-1)).